We begin with the raw amino-acid sequence, 349 residues long: Glycerol-3-phosphate dehydrogenase [NAD(+)], cytoplasmic (349 aa).

NAD(+)-binding positions include 10–15, phenylalanine 41, and phenylalanine 97; that span reads GSGNWG. Residue lysine 120 coordinates substrate. Alanine 153 is an NAD(+) binding site. Serine 154 carries the phosphoserine modification. Lysine 204 acts as the Proton acceptor in catalysis. Arginine 269 provides a ligand contact to NAD(+). 269-270 lines the substrate pocket; it reads RN. An N6-succinyllysine modification is found at lysine 289. NAD(+) contacts are provided by lysine 296 and glutamine 298. Phosphotyrosine is present on tyrosine 326.

The protein belongs to the NAD-dependent glycerol-3-phosphate dehydrogenase family. As to quaternary structure, homodimer. In terms of tissue distribution, expressed in liver (at protein level).

It is found in the cytoplasm. It carries out the reaction sn-glycerol 3-phosphate + NAD(+) = dihydroxyacetone phosphate + NADH + H(+). Its activity is regulated as follows. Inhibited by zinc ions and sulfate. Functionally, has glycerol-3-phosphate dehydrogenase activity. This chain is Glycerol-3-phosphate dehydrogenase [NAD(+)], cytoplasmic, found in Homo sapiens (Human).